The primary structure comprises 349 residues: Alanine racemase (349 aa).

Lysine 35 functions as the Proton acceptor; specific for D-alanine in the catalytic mechanism. Position 35 is an N6-(pyridoxal phosphate)lysine (lysine 35). Arginine 130 contacts substrate. Catalysis depends on tyrosine 244, which acts as the Proton acceptor; specific for L-alanine. Residue methionine 292 coordinates substrate.

Belongs to the alanine racemase family. Requires pyridoxal 5'-phosphate as cofactor.

It catalyses the reaction L-alanine = D-alanine. It functions in the pathway amino-acid biosynthesis; D-alanine biosynthesis; D-alanine from L-alanine: step 1/1. Functionally, catalyzes the interconversion of L-alanine and D-alanine. May also act on other amino acids. The polypeptide is Alanine racemase (alr) (Cereibacter sphaeroides (strain ATCC 17025 / ATH 2.4.3) (Rhodobacter sphaeroides)).